Consider the following 1444-residue polypeptide: Probable serine/threonine-protein kinase irlC (1444 aa).

Residues 335-370 form a disordered region; sequence TLINNNNNNNNNNNNNNNNNNNNNNNNNNNNNNNSK. Residues 338 to 368 are compositionally biased toward low complexity; that stretch reads NNNNNNNNNNNNNNNNNNNNNNNNNNNNNNN. The SWIM-type zinc finger occupies 495–529; it reads FTFYLSFGEIFTCSCEDYKREFSCKHMFFILLNYY. The span at 584 to 613 shows a compositional bias: low complexity; the sequence is TSPFQSINNNNNNNLNNNNNNNLNNNNNNE. Disordered regions lie at residues 584–619 and 864–938; these read TSPF…NKFK and QKEK…ITPI. 2 coiled-coil regions span residues 593 to 620 and 847 to 879; these read NNNN…KFKE and IKAE…KSKI. The span at 864–876 shows a compositional bias: basic residues; sequence QKEKKKQKQKQSK. Low complexity predominate over residues 885-937; the sequence is SSSSSSSSSPSTSNTTITSTTPTTTTTTTTTTTPTTTTTTTTTSSPKQKPITP. Residues 981 to 1246 form the Protein kinase domain; that stretch reads RKEENVLGRG…IEKILLHPFF (266 aa). Residues 987-995 and lysine 1010 each bind ATP; that span reads LGRGSNGTL. The active-site Proton acceptor is the aspartate 1116. The KEN domain occupies 1279-1444; that stretch reads NYQEINLKNN…LIYFNDLIIK (166 aa).

Belongs to the protein kinase superfamily. Ser/Thr protein kinase family.

It catalyses the reaction L-seryl-[protein] + ATP = O-phospho-L-seryl-[protein] + ADP + H(+). The catalysed reaction is L-threonyl-[protein] + ATP = O-phospho-L-threonyl-[protein] + ADP + H(+). In Dictyostelium discoideum (Social amoeba), this protein is Probable serine/threonine-protein kinase irlC (irlC).